The following is a 213-amino-acid chain: CASP-like protein 2A1 (213 aa).

At 1-41 (MSKMAEEKAAAVGGLGGAGAADAAQQQQLAAGEAAAARVRP) the chain is on the cytoplasmic side. The chain crosses the membrane as a helical span at residues 42 to 62 (VETLLRAAPLGLCVAAMTVML). The Extracellular segment spans residues 63-83 (RNQQSNEYGAVAYSDLGGFKY). A helical transmembrane segment spans residues 84-104 (LVYANGLCAAYSLVSAFYTAV). Residues 105 to 113 (PRPATVSRS) are Cytoplasmic-facing. A helical membrane pass occupies residues 114–134 (WLVFLLDQVFTYLILAAGAAA). Over 135–166 (AELLYLAYNGDKEVTWSEACGVFGSFCRQART) the chain is Extracellular. A helical transmembrane segment spans residues 167–187 (SVAITFGTVLCFILLSLISSY). Over 188–213 (RLFSAYEAPPSSALGSKGVEIAAYPR) the chain is Cytoplasmic.

It belongs to the Casparian strip membrane proteins (CASP) family. Homodimer and heterodimers.

It localises to the cell membrane. The polypeptide is CASP-like protein 2A1 (Zea mays (Maize)).